Reading from the N-terminus, the 377-residue chain is Ipis-1 (377 aa).

Residues asparagine 11 and asparagine 226 are each glycosylated (N-linked (GlcNAc...) asparagine).

The protein belongs to the serpin family. As to expression, female salivary gland. Not detected in midgut and other tissues.

It is found in the secreted. Its function is as follows. Salivary protein with immunosuppressive properties that can modulate blood feeding of ticks on vertebrate species. Inhibits proliferation of bovine peripheral blood mononuclear cells (PBMCs). Inhibits IFN-gamma (IFNG) production by bovine PBMCs. The sequence is that of Ipis-1 from Ixodes persulcatus (Taiga tick).